A 142-amino-acid polypeptide reads, in one-letter code: FAD synthase (142 aa).

Residues 9-10, 14-17, Asp92, and Tyr119 each bind ATP; these read TF and HPGH.

The protein belongs to the archaeal FAD synthase family. In terms of assembly, homodimer. A divalent metal cation is required as a cofactor.

It carries out the reaction FMN + ATP + H(+) = FAD + diphosphate. It participates in cofactor biosynthesis; FAD biosynthesis; FAD from FMN: step 1/1. Functionally, catalyzes the transfer of the AMP portion of ATP to flavin mononucleotide (FMN) to produce flavin adenine dinucleotide (FAD) coenzyme. This Halorhabdus utahensis (strain DSM 12940 / JCM 11049 / AX-2) protein is FAD synthase.